The chain runs to 113 residues: TYRO protein tyrosine kinase-binding protein (113 aa).

A signal peptide spans 1-21; that stretch reads MGGLEPCSRLLLLPLLLAVSG. The Extracellular portion of the chain corresponds to 22–40; the sequence is LRPVQAQAQSDCSCSTVSP. The chain crosses the membrane as a helical span at residues 41-61; that stretch reads GVLAGIVMGDLVLTVLIALAV. Residue D50 coordinates Ca(2+). At 62 to 113 the chain is on the cytoplasmic side; the sequence is YFLGRLVPRGRGAAEAATRKQRITETESPYQELQGQRSDVYSDLNTQRPYYK. The tract at residues 75-113 is disordered; sequence AEAATRKQRITETESPYQELQGQRSDVYSDLNTQRPYYK. An ITAM domain is found at 80–108; it reads RKQRITETESPYQELQGQRSDVYSDLNTQ. Over residues 87–113 the composition is skewed to polar residues; the sequence is TESPYQELQGQRSDVYSDLNTQRPYYK. A phosphotyrosine mark is found at Y91 and Y102.

It belongs to the TYROBP family. In terms of assembly, homodimer; disulfide-linked. Homotrimer; disulfide-linked. Homotetramer; disulfide-linked. Homotrimers and homotetramers form when low levels of partner receptors are available and are competitive with assembly with interacting receptors. They may represent alternative oligomerization states or may be intermediates in the receptor assembly process. Binding of a metal cation aids in homooligomerization through coordination of the metal ion by the subunits of the oligomer. Interacts with TREM1. Interacts with TREM2. Interacts with SIRPB1. Interacts with CLECSF5. Interacts with SIGLEC14. Interacts with CD300LB and CD300E. Interacts with CD300C2. Interacts (via ITAM domain) with SYK (via SH2 domains); activates SYK mediating neutrophil and macrophage integrin-mediated activation. Interacts with KLRC2, KIR2DS3 and KIR2DS5. Interacts with CD300H. Interacts with KIR2DS1. Interacts with KLRD1. Interacts with SIGLEC1. Following ligand binding by associated receptors, tyrosine phosphorylated in the ITAM domain which leads to activation of additional tyrosine kinases and subsequent cell activation. In terms of tissue distribution, expressed at low levels in the early development of the hematopoietic system and in the promonocytic stage and at high levels in mature monocytes. Expressed in hematological cells and tissues such as peripheral blood leukocytes and spleen. Also found in bone marrow, lymph nodes, placenta, lung and liver. Expressed at lower levels in different parts of the brain especially in the basal ganglia and corpus callosum.

It is found in the cell membrane. Functionally, adapter protein which non-covalently associates with activating receptors found on the surface of a variety of immune cells to mediate signaling and cell activation following ligand binding by the receptors. TYROBP is tyrosine-phosphorylated in the ITAM domain following ligand binding by the associated receptors which leads to activation of additional tyrosine kinases and subsequent cell activation. Also has an inhibitory role in some cells. Non-covalently associates with activating receptors of the CD300 family to mediate cell activation. Also mediates cell activation through association with activating receptors of the CD200R family. Required for neutrophil activation mediated by integrin. Required for the activation of myeloid cells mediated by the CLEC5A/MDL1 receptor. Associates with natural killer (NK) cell receptors such as KIR2DS2 and the KLRD1/KLRC2 heterodimer to mediate NK cell activation. Also enhances trafficking and cell surface expression of NK cell receptors KIR2DS1, KIR2DS2 and KIR2DS4 and ensures their stability at the cell surface. Associates with SIRPB1 to mediate activation of myeloid cells such as monocytes and dendritic cells. Associates with TREM1 to mediate activation of neutrophils and monocytes. Associates with TREM2 on monocyte-derived dendritic cells to mediate up-regulation of chemokine receptor CCR7 and dendritic cell maturation and survival. Association with TREM2 mediates cytokine-induced formation of multinucleated giant cells which are formed by the fusion of macrophages. Stabilizes the TREM2 C-terminal fragment (TREM2-CTF) produced by TREM2 ectodomain shedding which suppresses the release of pro-inflammatory cytokines. In microglia, required with TREM2 for phagocytosis of apoptotic neurons. Required with ITGAM/CD11B in microglia to control production of microglial superoxide ions which promote the neuronal apoptosis that occurs during brain development. Promotes pro-inflammatory responses in microglia following nerve injury which accelerates degeneration of injured neurons. Positively regulates the expression of the IRAK3/IRAK-M kinase and IL10 production by liver dendritic cells and inhibits their T cell allostimulatory ability. Negatively regulates B cell proliferation. Required for CSF1-mediated osteoclast cytoskeletal organization. Positively regulates multinucleation during osteoclast development. In Homo sapiens (Human), this protein is TYRO protein tyrosine kinase-binding protein.